The following is a 386-amino-acid chain: Acyl-lipid omega-3 desaturase (cytochrome b5), endoplasmic reticulum (386 aa).

The segment at 1 to 30 (MVVAMDQRTNVNGDPGAGDRKKEERFDPSA) is disordered. A compositionally biased stretch (basic and acidic residues) spans 17–27 (AGDRKKEERFD). The chain crosses the membrane as a helical span at residues 63-83 (IIAVAALAIAAVYVDSWFLWP). The short motif at 101–105 (HDCGH) is the Histidine box-1 element. The short motif at 137–141 (HRTHH) is the Histidine box-2 element. 2 helical membrane-spanning segments follow: residues 220–240 (WSIMFVSLIALSFVFGPLAVL) and 242–262 (VYGVPYIIFVMWLDAVTYLHH). The Histidine box-3 motif lies at 304-308 (HVIHH).

This sequence belongs to the fatty acid desaturase type 1 family. In terms of tissue distribution, abundant in leaves and seedlings. Barely detectable in root tissue.

It is found in the endoplasmic reticulum membrane. The catalysed reaction is a (9Z,12Z)-octadecadienoyl-containing glycerolipid + 2 Fe(II)-[cytochrome b5] + O2 + 2 H(+) = (9Z,12Z,15Z)-octadecatrienoyl-containing glycerolipid + 2 Fe(III)-[cytochrome b5] + 2 H2O. Its pathway is lipid metabolism; polyunsaturated fatty acid biosynthesis. Its function is as follows. Microsomal (ER) omega-3 fatty acid desaturase introduces the third double bond in the biosynthesis of 18:3 fatty acids, important constituents of plant membranes. It is thought to use cytochrome b5 as an electron donor and to act on fatty acids esterified to phosphatidylcholine and, possibly, other phospholipids. The protein is Acyl-lipid omega-3 desaturase (cytochrome b5), endoplasmic reticulum of Arabidopsis thaliana (Mouse-ear cress).